The primary structure comprises 538 residues: Chaperonin GroEL (538 aa).

ATP is bound by residues 29–32 (TIGP), 86–90 (DGTTT), glycine 413, 476–478 (NAA), and aspartate 492.

The protein belongs to the chaperonin (HSP60) family. As to quaternary structure, forms a cylinder of 14 subunits composed of two heptameric rings stacked back-to-back. Interacts with the co-chaperonin GroES.

It is found in the cytoplasm. The enzyme catalyses ATP + H2O + a folded polypeptide = ADP + phosphate + an unfolded polypeptide.. Functionally, together with its co-chaperonin GroES, plays an essential role in assisting protein folding. The GroEL-GroES system forms a nano-cage that allows encapsulation of the non-native substrate proteins and provides a physical environment optimized to promote and accelerate protein folding. The polypeptide is Chaperonin GroEL (Staphylococcus aureus (strain MRSA252)).